The following is an 803-amino-acid chain: Translation initiation factor IF-2 (803 aa).

2 disordered regions span residues 95–125 (PVVE…EKAE) and 138–178 (EVKE…EREE). The segment covering 111-121 (VPLTSDTTNLN) has biased composition (polar residues). Over residues 138 to 155 (EVKEEAKKTPSEKKETPK) the composition is skewed to basic and acidic residues. Positions 156 to 167 (KGPRKETRRSRK) are enriched in basic residues. Positions 168 to 178 (PDKEDKWEREE) are enriched in basic and acidic residues. A tr-type G domain is found at 302–471 (PRAPVVTIMG…LLQAEVLELK (170 aa)). Positions 311–318 (GHVDHGKT) are G1. 311–318 (GHVDHGKT) provides a ligand contact to GTP. The G2 stretch occupies residues 336 to 340 (GITQH). Positions 357 to 360 (DTPG) are G3. GTP-binding positions include 357–361 (DTPGH) and 411–414 (NKID). Positions 411 to 414 (NKID) are G4. Residues 447 to 449 (SAK) form a G5 region.

It belongs to the TRAFAC class translation factor GTPase superfamily. Classic translation factor GTPase family. IF-2 subfamily.

It localises to the cytoplasm. Functionally, one of the essential components for the initiation of protein synthesis. Protects formylmethionyl-tRNA from spontaneous hydrolysis and promotes its binding to the 30S ribosomal subunits. Also involved in the hydrolysis of GTP during the formation of the 70S ribosomal complex. The chain is Translation initiation factor IF-2 from Coxiella burnetii (strain CbuK_Q154) (Coxiella burnetii (strain Q154)).